Consider the following 410-residue polypeptide: Elongation factor Tu, chloroplastic (410 aa).

The tr-type G domain occupies 10-215; it reads KPHVNIGTIG…IVDEYIPTPQ (206 aa). The G1 stretch occupies residues 19–26; it reads GHVDHGKT. 19-26 is a binding site for GTP; it reads GHVDHGKT. Thr26 is a Mg(2+) binding site. The segment at 61-65 is G2; the sequence is GITIN. A G3 region spans residues 82–85; that stretch reads DCPG. GTP is bound by residues 82 to 86 and 137 to 140; these read DCPGH and NKAD. The G4 stretch occupies residues 137-140; sequence NKAD. Residues 175 to 177 form a G5 region; sequence SAL.

It belongs to the TRAFAC class translation factor GTPase superfamily. Classic translation factor GTPase family. EF-Tu/EF-1A subfamily.

It is found in the plastid. The protein resides in the chloroplast. It carries out the reaction GTP + H2O = GDP + phosphate + H(+). Functionally, GTP hydrolase that promotes the GTP-dependent binding of aminoacyl-tRNA to the A-site of ribosomes during protein biosynthesis. The chain is Elongation factor Tu, chloroplastic (tufA) from Cyanidioschyzon merolae (strain NIES-3377 / 10D) (Unicellular red alga).